We begin with the raw amino-acid sequence, 425 residues long: UPF0761 membrane protein xcc-b100_3490 (425 aa).

Helical transmembrane passes span 48 to 68 (VFAL…FPAF), 105 to 125 (FTVA…HSIE), 154 to 174 (GTML…LPLF), 182 to 202 (LAEF…IVLI), 216 to 236 (ALPG…GFGF), and 250 to 270 (ALSA…SVLL).

This sequence belongs to the UPF0761 family.

It localises to the cell inner membrane. This chain is UPF0761 membrane protein xcc-b100_3490, found in Xanthomonas campestris pv. campestris (strain B100).